Here is a 141-residue protein sequence, read N- to C-terminus: Large ribosomal subunit protein uL16c (141 aa).

Over residues 1 to 17 (MLSPKRTKYRKPHRGNR) the composition is skewed to basic residues. A disordered region spans residues 1-21 (MLSPKRTKYRKPHRGNRKGQA).

This sequence belongs to the universal ribosomal protein uL16 family. Part of the 50S ribosomal subunit.

The protein resides in the plastid. It is found in the chloroplast. The sequence is that of Large ribosomal subunit protein uL16c from Ostreococcus tauri.